A 339-amino-acid chain; its full sequence is Lipoate-protein ligase A (339 aa).

Residues 28-211 (NPDSHTLFLW…AFREYYRDTD (184 aa)) enclose the BPL/LPL catalytic domain. Residues arginine 70, 75–78 (GAVF), and lysine 129 contribute to the ATP site. Lysine 129 is a binding site for (R)-lipoate.

Belongs to the LplA family. As to quaternary structure, monomer.

The protein resides in the cytoplasm. The enzyme catalyses L-lysyl-[lipoyl-carrier protein] + (R)-lipoate + ATP = N(6)-[(R)-lipoyl]-L-lysyl-[lipoyl-carrier protein] + AMP + diphosphate + H(+). It participates in protein modification; protein lipoylation via exogenous pathway; protein N(6)-(lipoyl)lysine from lipoate: step 1/2. It functions in the pathway protein modification; protein lipoylation via exogenous pathway; protein N(6)-(lipoyl)lysine from lipoate: step 2/2. Catalyzes both the ATP-dependent activation of exogenously supplied lipoate to lipoyl-AMP and the transfer of the activated lipoyl onto the lipoyl domains of lipoate-dependent enzymes. The protein is Lipoate-protein ligase A of Psychrobacter cryohalolentis (strain ATCC BAA-1226 / DSM 17306 / VKM B-2378 / K5).